A 312-amino-acid chain; its full sequence is HTH-type transcriptional regulator PtxR (312 aa).

Residues 11–68 (LNLNHLYAFVAVAEHNSFTAAAEALGLSKSLLSEQLRRLEADLGIQLLTRTTRRMTLT) form the HTH lysR-type domain. A DNA-binding region (H-T-H motif) is located at residues 28–47 (FTAAAEALGLSKSLLSEQLR).

This sequence belongs to the LysR transcriptional regulatory family. Monomer in solution. May dimerize on binding to DNA. Interacts with PtxS in the absence of 2-ketogluconate. Binding of the 2-ketogluconate effector to PtxS causes PtxS/PtxR complex dissociation.

Negatively regulated by PtxS, which interacts with PtxR and prevents its activity. In terms of biological role, plays an important role in the regulation of the production of the virulence factor exotoxin A (toxA), via positive regulation of the transcription of the toxA gene. Acts by binding directly to the toxA promoter region. Besides toxA, PtxR modulates the expression of genes that code for the QS-controlled virulence factors. It negatively regulates the expression of the rhamnolipid and pyocyanine genes, through the autoinducer synthase RhlI, and the PQS synthesis operon pqsABCDE, while it positively regulates the expression of lasB through the autoinducer synthase LasI. Also positively regulates the expression of the exotoxin A regulatory protein (toxR or regA). Its function is as follows. In addition, is involved in the positive regulation of glucose metabolism via the regulation of the expression of the kgu and gad operons. Acts by binding directly to the promoter region of the kgu and gad operons. This Pseudomonas aeruginosa (strain ATCC 15692 / DSM 22644 / CIP 104116 / JCM 14847 / LMG 12228 / 1C / PRS 101 / PAO1) protein is HTH-type transcriptional regulator PtxR.